Here is a 376-residue protein sequence, read N- to C-terminus: Palmitoyltransferase PFA4 (376 aa).

Residues Met1–Gly11 are Cytoplasmic-facing. The helical transmembrane segment at Ile12 to Leu32 threads the bilayer. Residues Asn33–Gln40 are Lumenal-facing. Residues Leu41–Pro61 traverse the membrane as a helical segment. The Cytoplasmic portion of the chain corresponds to Pro62–His122. Residues Val78–Phe128 enclose the DHHC domain. The S-palmitoyl cysteine intermediate role is filled by Cys108. Residues Phe123–Thr143 form a helical membrane-spanning segment. At Arg144–Glu163 the chain is on the lumenal side. The chain crosses the membrane as a helical span at residues Leu164 to Leu184. Topologically, residues Met185 to Glu376 are cytoplasmic.

This sequence belongs to the DHHC palmitoyltransferase family. PFA4 subfamily.

It is found in the endoplasmic reticulum membrane. The enzyme catalyses L-cysteinyl-[protein] + hexadecanoyl-CoA = S-hexadecanoyl-L-cysteinyl-[protein] + CoA. In terms of biological role, mediates the reversible addition of palmitate to target proteins, thereby regulating their membrane association and biological function. The protein is Palmitoyltransferase PFA4 of Candida glabrata (strain ATCC 2001 / BCRC 20586 / JCM 3761 / NBRC 0622 / NRRL Y-65 / CBS 138) (Yeast).